Reading from the N-terminus, the 95-residue chain is Synaptobrevin-A (95 aa).

Topologically, residues 1–70 are cytoplasmic; it reads MSEPVNKVKQ…KRLMWCRNIK (70 aa). Residues 7–67 form the v-SNARE coiled-coil homology domain; that stretch reads KVKQTQQQVD…NEIKRLMWCR (61 aa). A helical; Anchor for type IV membrane protein transmembrane segment spans residues 71 to 91; that stretch reads LTLIIIAVVVLLLVVIIVPIV. Residues 92 to 95 lie on the Vesicular side of the membrane; the sequence is LKFT.

Belongs to the synaptobrevin family.

It localises to the cytoplasmic vesicle. It is found in the secretory vesicle membrane. Its function is as follows. Involved in the targeting and/or fusion of transport vesicles to their target membrane. This chain is Synaptobrevin-A (sybA), found in Dictyostelium discoideum (Social amoeba).